The following is a 215-amino-acid chain: Cytidylate kinase (215 aa).

Residue 10 to 18 (GPAASGKGT) coordinates ATP.

Belongs to the cytidylate kinase family. Type 1 subfamily.

The protein resides in the cytoplasm. It carries out the reaction CMP + ATP = CDP + ADP. The catalysed reaction is dCMP + ATP = dCDP + ADP. The protein is Cytidylate kinase of Bartonella quintana (strain Toulouse) (Rochalimaea quintana).